An 823-amino-acid polypeptide reads, in one-letter code: Leucine--tRNA ligase (823 aa).

The 'HIGH' region motif lies at 55-65 (PYPSGNLHIGH). Residues 590-594 (KMSKS) carry the 'KMSKS' region motif. K593 is a binding site for ATP.

It belongs to the class-I aminoacyl-tRNA synthetase family.

Its subcellular location is the cytoplasm. It catalyses the reaction tRNA(Leu) + L-leucine + ATP = L-leucyl-tRNA(Leu) + AMP + diphosphate. The chain is Leucine--tRNA ligase from Deinococcus radiodurans (strain ATCC 13939 / DSM 20539 / JCM 16871 / CCUG 27074 / LMG 4051 / NBRC 15346 / NCIMB 9279 / VKM B-1422 / R1).